The chain runs to 161 residues: Protein-export protein SecB (161 aa).

It belongs to the SecB family. In terms of assembly, homotetramer, a dimer of dimers. One homotetramer interacts with 1 SecA dimer.

Its subcellular location is the cytoplasm. One of the proteins required for the normal export of preproteins out of the cell cytoplasm. It is a molecular chaperone that binds to a subset of precursor proteins, maintaining them in a translocation-competent state. It also specifically binds to its receptor SecA. This chain is Protein-export protein SecB, found in Shewanella baltica (strain OS223).